A 248-amino-acid chain; its full sequence is Triosephosphate isomerase (248 aa).

The D-glyceraldehyde 3-phosphate site is built by N10 and K12. The Electrophile role is filled by H95. The active-site Proton acceptor is the E165. D-glyceraldehyde 3-phosphate contacts are provided by residues G171, L230, and 232 to 233 (GN).

This sequence belongs to the triosephosphate isomerase family. As to quaternary structure, homodimer.

The enzyme catalyses D-glyceraldehyde 3-phosphate = dihydroxyacetone phosphate. Its pathway is carbohydrate biosynthesis; gluconeogenesis. It functions in the pathway carbohydrate degradation; glycolysis; D-glyceraldehyde 3-phosphate from glycerone phosphate: step 1/1. In terms of biological role, catalyzes the interconversion of glyceraldehyde 3-phosphate and dihydroxyacetone phosphate in the glycolytic and gluconeogenic pathways. This is Triosephosphate isomerase from Plasmodium falciparum (isolate 3D7).